Consider the following 180-residue polypeptide: ATP synthase subunit delta (180 aa).

The protein belongs to the ATPase delta chain family. As to quaternary structure, F-type ATPases have 2 components, F(1) - the catalytic core - and F(0) - the membrane proton channel. F(1) has five subunits: alpha(3), beta(3), gamma(1), delta(1), epsilon(1). F(0) has three main subunits: a(1), b(2) and c(10-14). The alpha and beta chains form an alternating ring which encloses part of the gamma chain. F(1) is attached to F(0) by a central stalk formed by the gamma and epsilon chains, while a peripheral stalk is formed by the delta and b chains.

Its subcellular location is the cell membrane. In terms of biological role, f(1)F(0) ATP synthase produces ATP from ADP in the presence of a proton or sodium gradient. F-type ATPases consist of two structural domains, F(1) containing the extramembraneous catalytic core and F(0) containing the membrane proton channel, linked together by a central stalk and a peripheral stalk. During catalysis, ATP synthesis in the catalytic domain of F(1) is coupled via a rotary mechanism of the central stalk subunits to proton translocation. This protein is part of the stalk that links CF(0) to CF(1). It either transmits conformational changes from CF(0) to CF(1) or is implicated in proton conduction. The chain is ATP synthase subunit delta from Bacillus cereus (strain B4264).